We begin with the raw amino-acid sequence, 351 residues long: Thiamine-phosphate synthase (351 aa).

The tract at residues M1–E128 is unknown. The tract at residues I129–N351 is thiamine-phosphate synthase. 4-amino-2-methyl-5-(diphosphooxymethyl)pyrimidine-binding positions include Q180–K184 and N212. Mg(2+)-binding residues include D213 and D232. S251 contributes to the 4-amino-2-methyl-5-(diphosphooxymethyl)pyrimidine binding site. 2-[(2R,5Z)-2-carboxy-4-methylthiazol-5(2H)-ylidene]ethyl phosphate is bound at residue T277–T279. K280 is a 4-amino-2-methyl-5-(diphosphooxymethyl)pyrimidine binding site. G307 is a 2-[(2R,5Z)-2-carboxy-4-methylthiazol-5(2H)-ylidene]ethyl phosphate binding site.

The protein belongs to the thiamine-phosphate synthase family. Requires Mg(2+) as cofactor.

It carries out the reaction 2-[(2R,5Z)-2-carboxy-4-methylthiazol-5(2H)-ylidene]ethyl phosphate + 4-amino-2-methyl-5-(diphosphooxymethyl)pyrimidine + 2 H(+) = thiamine phosphate + CO2 + diphosphate. It catalyses the reaction 2-(2-carboxy-4-methylthiazol-5-yl)ethyl phosphate + 4-amino-2-methyl-5-(diphosphooxymethyl)pyrimidine + 2 H(+) = thiamine phosphate + CO2 + diphosphate. The enzyme catalyses 4-methyl-5-(2-phosphooxyethyl)-thiazole + 4-amino-2-methyl-5-(diphosphooxymethyl)pyrimidine + H(+) = thiamine phosphate + diphosphate. Its pathway is cofactor biosynthesis; thiamine diphosphate biosynthesis; thiamine phosphate from 4-amino-2-methyl-5-diphosphomethylpyrimidine and 4-methyl-5-(2-phosphoethyl)-thiazole: step 1/1. In terms of biological role, condenses 4-methyl-5-(beta-hydroxyethyl)thiazole monophosphate (THZ-P) and 2-methyl-4-amino-5-hydroxymethyl pyrimidine pyrophosphate (HMP-PP) to form thiamine monophosphate (TMP). The polypeptide is Thiamine-phosphate synthase (Prochlorococcus marinus (strain AS9601)).